Consider the following 189-residue polypeptide: Interferon alpha-6 (189 aa).

The first 23 residues, 1–23 (MARLCAFLMVLAVLSYWPTCSLG), serve as a signal peptide directing secretion. 2 disulfides stabilise this stretch: Cys-24–Cys-122 and Cys-52–Cys-162. Residue Asn-101 is glycosylated (N-linked (GlcNAc...) asparagine).

Belongs to the alpha/beta interferon family.

It localises to the secreted. In terms of biological role, produced by macrophages, IFN-alpha have antiviral activities. Interferon stimulates the production of two enzymes: a protein kinase and an oligoadenylate synthetase. This chain is Interferon alpha-6 (Ifna6), found in Mus musculus (Mouse).